We begin with the raw amino-acid sequence, 513 residues long: Proline-rich receptor-like protein kinase PERK3 (513 aa).

The Extracellular portion of the chain corresponds to 1-123 (MARSNRCVPQ…SPPSPSRLST (123 aa)). A glycan (N-linked (GlcNAc...) asparagine) is linked at Asn-11. The span at 27–36 (LKSRWQQITM) shows a compositional bias: polar residues. Positions 27 to 119 (LKSRWQQITM…GFSLSPPSPS (93 aa)) are disordered. Asn-66 carries N-linked (GlcNAc...) asparagine glycosylation. The span at 78–89 (PSTSTPPRLGNR) shows a compositional bias: low complexity. Residues 99 to 111 (GQEPTTPTMTPGF) show a composition bias toward polar residues. A helical membrane pass occupies residues 124 to 144 (GAVVGISIGGGVFVLTLIFFL). Residues 145 to 513 (CKKKRPRDDK…TAQRYGGDSL (369 aa)) are Cytoplasmic-facing. A Phosphothreonine modification is found at Thr-172. The Protein kinase domain maps to 183–334 (FSEANLLGEG…DFGLAKIALD (152 aa)). ATP is bound by residues 189-197 (LGEGGFGFV) and Lys-211. Tyr-256 is modified (phosphotyrosine). Asp-307 functions as the Proton acceptor in the catalytic mechanism. Position 340 is a phosphoserine (Ser-340). Residues Thr-341 and Thr-346 each carry the phosphothreonine modification. Tyr-354 is subject to Phosphotyrosine.

The protein belongs to the protein kinase superfamily. Ser/Thr protein kinase family. In terms of tissue distribution, expressed at low levels in inflorescence bolt, flower buds, siliques, roots, seedlings and leaves.

Its subcellular location is the cell membrane. The enzyme catalyses L-seryl-[protein] + ATP = O-phospho-L-seryl-[protein] + ADP + H(+). The catalysed reaction is L-threonyl-[protein] + ATP = O-phospho-L-threonyl-[protein] + ADP + H(+). The chain is Proline-rich receptor-like protein kinase PERK3 (PERK3) from Arabidopsis thaliana (Mouse-ear cress).